The following is an 83-amino-acid chain: Large ribosomal subunit protein bL27 (83 aa).

Belongs to the bacterial ribosomal protein bL27 family.

In Bifidobacterium adolescentis (strain ATCC 15703 / DSM 20083 / NCTC 11814 / E194a), this protein is Large ribosomal subunit protein bL27.